The primary structure comprises 396 residues: Stearoyl-[acyl-carrier-protein] 9-desaturase, chloroplastic (396 aa).

The transit peptide at 1–33 (MAIRINTATFQSDLYRSFAFPQPKPLRSPKFAM) directs the protein to the chloroplast. The Fe cation site is built by Glu-138, Glu-176, His-179, Glu-229, Glu-262, and His-265.

Belongs to the fatty acid desaturase type 2 family. As to quaternary structure, homodimer. Requires Fe(2+) as cofactor.

The protein resides in the plastid. It localises to the chloroplast. The enzyme catalyses octadecanoyl-[ACP] + 2 reduced [2Fe-2S]-[ferredoxin] + O2 + 2 H(+) = (9Z)-octadecenoyl-[ACP] + 2 oxidized [2Fe-2S]-[ferredoxin] + 2 H2O. Its pathway is lipid metabolism; fatty acid metabolism. In terms of biological role, converts stearoyl-ACP to oleoyl-ACP by introduction of a cis double bond between carbons 9 and 10 of the acyl chain. This Helianthus annuus (Common sunflower) protein is Stearoyl-[acyl-carrier-protein] 9-desaturase, chloroplastic.